A 152-amino-acid polypeptide reads, in one-letter code: MSQLCPCGSAVEYSLCCHPYVSGEKVAPDPEHLMRSRYCAFVMQDADYLIKTWHPSCGATALRAELIAGFAHTEWLGLTVFEHCWQDGGNIGFVSFVARFTEGGKTGAIIERSRFLKENGQWYYIDGTRPQFGRNDPCPCGSGKKFKKCCGQ.

The protein belongs to the UPF0225 family.

This is UPF0225 protein YchJ from Escherichia coli O6:K15:H31 (strain 536 / UPEC).